Here is a 439-residue protein sequence, read N- to C-terminus: MNIFEHSIKNVDKGNVVAIVGTQWGDEGKGKIIDILSKYSDITCRFNGGGNAGHTICVGDKKHALHLLPCGVLYENNINILGNCMVIHLKTLMKEINNLGNNILDRIYISEKAHILFDIHQEIDAIQEIRKSKDGNAIGTTKKGIGPCYSTKASRIGIRMGSLRNFENFKKLYIKLIDNLMDLYNIKDYNKEEELNEFYTYHLIFKDKIINIISYINKSIDSKKYILIEGANAAMLDIDLGTYPFVTSSSTTLGGIFSGLGIHHKKLNLVVGVVKSYLTRVGSGPFLTEQCNEIGEYLTKKGFEYGTTTKRPRRCGWLDLPMIFYVKYINCIDIINLTKLDVLSGLKEIYICIDYKNKTTGELLERGNYPLEYEQLREYEPVYEKFEGWDEDITNCIEFYELPENAKKYVLAIESYIKTPIVWIGVGPTRNNTITRKFD.

GTP is bound by residues 25–31, 53–55, and K62; these read GDEGKGK and GHT. The active-site Proton acceptor is the D26. Residues D26 and G53 each contribute to the Mg(2+) site. Residues 26 to 29 and 51 to 54 each bind IMP; these read DEGK and NAGH. The active-site Proton donor is H54. IMP contacts are provided by T141, R155, N232, and T247. T307 is a binding site for GTP. Residue 307–313 participates in substrate binding; sequence TTTKRPR. Position 311 (R311) interacts with IMP. GTP is bound by residues R313, 339 to 341, and 425 to 427; these read KLD and GVG.

The protein belongs to the adenylosuccinate synthetase family. In terms of assembly, homodimer. Mg(2+) is required as a cofactor.

The protein resides in the cytoplasm. It carries out the reaction IMP + L-aspartate + GTP = N(6)-(1,2-dicarboxyethyl)-AMP + GDP + phosphate + 2 H(+). It participates in purine metabolism; AMP biosynthesis via de novo pathway; AMP from IMP: step 1/2. Plays an important role in the salvage pathway for purine nucleotide biosynthesis. Catalyzes the first commited step in the biosynthesis of AMP from IMP. This Plasmodium berghei (strain Anka) protein is Adenylosuccinate synthetase (ADSS).